A 358-amino-acid polypeptide reads, in one-letter code: Arginine kinase (358 aa).

A Phosphagen kinase N-terminal domain is found at 2–84 (SDADLFSKLD…LDEVIKDYHK (83 aa)). 57-61 (GVGIY) is a binding site for substrate. The Phosphagen kinase C-terminal domain occupies 112-350 (FIVSTRVRVG…EEILKREKEL (239 aa)). ATP contacts are provided by residues 115–119 (STRVR) and H178. Substrate is bound at residue E218. Position 222 (R222) interacts with ATP. C265 serves as a coordination point for substrate. ATP is bound by residues 274-278 (RASVH) and 303-308 (RGIHGE). Residue E308 participates in substrate binding.

The protein belongs to the ATP:guanido phosphotransferase family.

The catalysed reaction is L-arginine + ATP = N(omega)-phospho-L-arginine + ADP + H(+). This is Arginine kinase from Turbo cornutus (Horned turban).